Reading from the N-terminus, the 499-residue chain is Endoglucanase (499 aa).

The N-terminal stretch at 1–29 (MKRSISIFITCLLITLLTMGGMLASPASA) is a signal peptide. Residues histidine 65, 69–70 (WY), tyrosine 96, and histidine 131 contribute to the substrate site. The active-site Proton donor is glutamate 169. Residue tyrosine 231 participates in substrate binding. The active-site Nucleophile is glutamate 257. Substrate-binding positions include 263–264 (AS), tryptophan 291, and 296–298 (KQE). The 150-residue stretch at 350-499 (QENGISVQYR…GKLIWGTEPN (150 aa)) folds into the CBM3 domain.

Belongs to the glycosyl hydrolase 5 (cellulase A) family.

It carries out the reaction Endohydrolysis of (1-&gt;4)-beta-D-glucosidic linkages in cellulose, lichenin and cereal beta-D-glucans.. The protein is Endoglucanase (bglC) of Bacillus subtilis.